The following is a 143-amino-acid chain: Large ribosomal subunit protein uL11 (143 aa).

Belongs to the universal ribosomal protein uL11 family. As to quaternary structure, part of the ribosomal stalk of the 50S ribosomal subunit. Interacts with L10 and the large rRNA to form the base of the stalk. L10 forms an elongated spine to which L12 dimers bind in a sequential fashion forming a multimeric L10(L12)X complex. In terms of processing, one or more lysine residues are methylated.

Its function is as follows. Forms part of the ribosomal stalk which helps the ribosome interact with GTP-bound translation factors. This chain is Large ribosomal subunit protein uL11, found in Acidovorax ebreus (strain TPSY) (Diaphorobacter sp. (strain TPSY)).